The primary structure comprises 368 residues: MQHHKVAIIGAGAAGIGMAITLKDFGITDVIILEKGTVGHSFKHWPKSTRTITPSFTSNGFGMPDMNAISMDTSPAFTFNEEHISGETYAEYLQVVANHYELNIFENTVVTNISADDAYYTIATTTETYHADYIFVATGDYNFPKKPFKYGIHYSEIEDFDNFNKGQYVVIGGNESGFDAAYQLAKNGSDIALYTSTTGLNDPDADPSVRLSPYTRQRLGNVIKQGARIEMNVHYTVKDIDFNNGQYHISFDSGQSVHTPHEPILATGFDATKNPIVQQLFVTTNQDIKLTTHDESTRYPNIFMIGATVENDNAKLCYIYKFRARFAVLAHLLTQREGLPAKQEVIENYQKNQMYLDDYSCCEVSCTC.

Residues Ala14, Glu34, Ser41, 52-53, Val110, Ala307, and Ile319 contribute to the FAD site; that span reads IT.

FAD is required as a cofactor.

In terms of biological role, FAD-binding protein that may have monooxygenase activity using NADPH and/or NADH as an electron donor. The protein is Putative flavoprotein monooxygenase of Staphylococcus aureus (strain Mu50 / ATCC 700699).